Here is a 122-residue protein sequence, read N- to C-terminus: Prefoldin subunit 1 (122 aa).

This sequence belongs to the prefoldin subunit beta family. As to quaternary structure, heterohexamer of two PFD-alpha type and four PFD-beta type subunits.

In terms of biological role, binds specifically to cytosolic chaperonin (c-CPN) and transfers target proteins to it. Binds to nascent polypeptide chain and promotes folding in an environment in which there are many competing pathways for nonnative proteins. This chain is Prefoldin subunit 1 (pfdn1), found in Tetraodon nigroviridis (Spotted green pufferfish).